A 914-amino-acid chain; its full sequence is Probable dipeptidyl-aminopeptidase B (914 aa).

Residues 1–10 (MATFSDHETS) are compositionally biased toward basic and acidic residues. Positions 1–63 (MATFSDHETS…TGMDNGDRYR (63 aa)) are disordered. Over 1 to 91 (MATFSDHETS…KAATGGRARR (91 aa)) the chain is Cytoplasmic. Residues 20 to 35 (STSSASQTSSDSGLSS) show a composition bias toward low complexity. Positions 45–56 (QPFSAPNGTTGM) are enriched in polar residues. Residues 92–112 (IFWLLVLLCFGGWLLAFVLFL) form a helical; Signal-anchor for type II membrane protein membrane-spanning segment. Residues 113–914 (TGGRANYQSA…RFKRSLPVLV (802 aa)) lie on the Vacuolar side of the membrane. Asparagine 348, asparagine 565, and asparagine 639 each carry an N-linked (GlcNAc...) asparagine glycan. The Charge relay system role is filled by serine 753. The N-linked (GlcNAc...) asparagine glycan is linked to asparagine 807. Catalysis depends on charge relay system residues aspartate 830 and histidine 863.

This sequence belongs to the peptidase S9B family.

It localises to the vacuole membrane. The enzyme catalyses Release of an N-terminal dipeptide, Xaa-Yaa-|-Zaa-, from a polypeptide, preferentially when Yaa is Pro, provided Zaa is neither Pro nor hydroxyproline.. In terms of biological role, type IV dipeptidyl-peptidase which removes N-terminal dipeptides sequentially from polypeptides having unsubstituted N-termini provided that the penultimate residue is proline. The protein is Probable dipeptidyl-aminopeptidase B (dapB) of Aspergillus clavatus (strain ATCC 1007 / CBS 513.65 / DSM 816 / NCTC 3887 / NRRL 1 / QM 1276 / 107).